The primary structure comprises 400 residues: 2'-5'-oligoadenylate synthase 1 (400 aa).

The segment at 13 to 60 (DKFIEDYLLPDTCFRMQINHAIDIICGFLKERCFRGSSYPVCVSKVVK) is interaction with dsRNA. Ser63 is an ATP binding site. Residues Asp75, Asp77, and Asp148 each contribute to the Mg(2+) site. The interaction with dsRNA stretch occupies residues 200 to 210 (QRPTKLKSLIR). Arg210, Lys213, and Gln229 together coordinate ATP. Residue Cys397 is the site of S-geranylgeranyl cysteine attachment.

Belongs to the 2-5A synthase family. Monomer. Homotetramer. Requires Mg(2+) as cofactor. In terms of processing, prenylated at C-terminal. C-terminal prenylation is necessary to initiate a block to SARS-CoV-2 and is associated with protection from severe COVID-1. The prenylated form is targeted to perinuclear structures rich in viral dsRNA, whereas the non-prenylated form is diffusely localized and unable to initiate a detectable block to SARS-CoV-2 replication. C-terminal prenylation is also necessary to initiate a block to cardiovirus EMCV. Not prenylated at C-terminal. The non-prenylated form is diffusely localized and unable to initiate a detectable block to SARS-CoV-2 replication. As to expression, expressed in lungs.

Its subcellular location is the cytoplasm. The protein resides in the mitochondrion. It is found in the nucleus. It localises to the microsome. The protein localises to the endoplasmic reticulum. Its subcellular location is the secreted. It carries out the reaction 3 ATP = 5'-triphosphoadenylyl-(2'-&gt;5')-adenylyl-(2'-&gt;5')-adenosine + 2 diphosphate. With respect to regulation, produced as a latent enzyme which is activated by dsRNA generated during the course of viral infection. The dsRNA activator must be at least 15 nucleotides long, and no modification of the 2'-hydroxyl group is tolerated. ssRNA or dsDNA do not act as activators. Functionally, interferon-induced, dsRNA-activated antiviral enzyme which plays a critical role in cellular innate antiviral response. In addition, it may also play a role in other cellular processes such as apoptosis, cell growth, differentiation and gene regulation. Synthesizes higher oligomers of 2'-5'-oligoadenylates (2-5A) from ATP which then bind to the inactive monomeric form of ribonuclease L (RNase L) leading to its dimerization and subsequent activation. Activation of RNase L leads to degradation of cellular as well as viral RNA, resulting in the inhibition of protein synthesis, thus terminating viral replication. Can mediate the antiviral effect via the classical RNase L-dependent pathway or an alternative antiviral pathway independent of RNase L. The secreted form displays antiviral effect against vesicular stomatitis virus (VSV), herpes simplex virus type 2 (HSV-2), and encephalomyocarditis virus (EMCV) and stimulates the alternative antiviral pathway independent of RNase L. Its function is as follows. When prenylated at C-terminal, acts as a double-stranded RNA (dsRNA) sensor specifically targeted to membranous replicative organelles in SARS coronavirus-2/SARS-CoV-2 infected cells where it binds to dsRNA structures in the SARS-CoV-2 5'-UTR and initiates a potent block to SARS-CoV-2 replication. Recognizes short stretches of dsRNA and activates RNase L. The binding is remarkably specific, with two conserved stem loops in the SARS-CoV-2 5'- untranslated region (UTR) constituting the principal viral target. The same mechanism is necessary to initiate a block to cardiovirus EMCV. In terms of biological role, not prenylated at C-terminal, is diffusely localized and unable to initiate a detectable block to SARS-CoV-2 replication. In Homo sapiens (Human), this protein is 2'-5'-oligoadenylate synthase 1 (OAS1).